We begin with the raw amino-acid sequence, 58 residues long: Small ribosomal subunit protein bS21 (58 aa).

The tract at residues arginine 35 to lysine 58 is disordered. Positions valine 43–lysine 58 are enriched in basic residues.

The protein belongs to the bacterial ribosomal protein bS21 family.

The chain is Small ribosomal subunit protein bS21 from Ruminiclostridium cellulolyticum (strain ATCC 35319 / DSM 5812 / JCM 6584 / H10) (Clostridium cellulolyticum).